A 361-amino-acid polypeptide reads, in one-letter code: Phosphoserine aminotransferase (361 aa).

Residue Arg43 coordinates L-glutamate. Pyridoxal 5'-phosphate contacts are provided by residues 77-78, Trp103, Thr153, Asp173, and Gln196; that span reads AS. N6-(pyridoxal phosphate)lysine is present on Lys197. A pyridoxal 5'-phosphate-binding site is contributed by 238–239; it reads NT.

It belongs to the class-V pyridoxal-phosphate-dependent aminotransferase family. SerC subfamily. In terms of assembly, homodimer. Pyridoxal 5'-phosphate is required as a cofactor.

The protein resides in the cytoplasm. The enzyme catalyses O-phospho-L-serine + 2-oxoglutarate = 3-phosphooxypyruvate + L-glutamate. The catalysed reaction is 4-(phosphooxy)-L-threonine + 2-oxoglutarate = (R)-3-hydroxy-2-oxo-4-phosphooxybutanoate + L-glutamate. It participates in amino-acid biosynthesis; L-serine biosynthesis; L-serine from 3-phospho-D-glycerate: step 2/3. The protein operates within cofactor biosynthesis; pyridoxine 5'-phosphate biosynthesis; pyridoxine 5'-phosphate from D-erythrose 4-phosphate: step 3/5. Its function is as follows. Catalyzes the reversible conversion of 3-phosphohydroxypyruvate to phosphoserine and of 3-hydroxy-2-oxo-4-phosphonooxybutanoate to phosphohydroxythreonine. This Ectopseudomonas mendocina (strain ymp) (Pseudomonas mendocina) protein is Phosphoserine aminotransferase.